The following is a 337-amino-acid chain: uncharacterized protein (337 aa).

This sequence belongs to the NAD(P)-dependent epimerase/dehydratase family.

This is an uncharacterized protein from Escherichia coli (strain K12).